The following is a 102-amino-acid chain: Small ribosomal subunit protein uS10 (102 aa).

This sequence belongs to the universal ribosomal protein uS10 family. In terms of assembly, part of the 30S ribosomal subunit.

Involved in the binding of tRNA to the ribosomes. This Hyperthermus butylicus (strain DSM 5456 / JCM 9403 / PLM1-5) protein is Small ribosomal subunit protein uS10.